A 93-amino-acid polypeptide reads, in one-letter code: Acylphosphatase (93 aa).

The Acylphosphatase-like domain occupies 5 to 91; that stretch reads RAHFLVKGFV…RGETTFRIRS (87 aa). Residues Arg-20 and Asn-38 contribute to the active site.

Belongs to the acylphosphatase family.

It catalyses the reaction an acyl phosphate + H2O = a carboxylate + phosphate + H(+). In Moorella thermoacetica (strain ATCC 39073 / JCM 9320), this protein is Acylphosphatase (acyP).